The sequence spans 338 residues: RNA 3'-terminal phosphate cyclase (338 aa).

ATP contacts are provided by residues Q103 and 283-287; that span reads YLADQ. H308 functions as the Tele-AMP-histidine intermediate in the catalytic mechanism.

The protein belongs to the RNA 3'-terminal cyclase family. Type 1 subfamily.

The protein resides in the cytoplasm. The catalysed reaction is a 3'-end 3'-phospho-ribonucleotide-RNA + ATP = a 3'-end 2',3'-cyclophospho-ribonucleotide-RNA + AMP + diphosphate. Its function is as follows. Catalyzes the conversion of 3'-phosphate to a 2',3'-cyclic phosphodiester at the end of RNA. The mechanism of action of the enzyme occurs in 3 steps: (A) adenylation of the enzyme by ATP; (B) transfer of adenylate to an RNA-N3'P to produce RNA-N3'PP5'A; (C) and attack of the adjacent 2'-hydroxyl on the 3'-phosphorus in the diester linkage to produce the cyclic end product. The biological role of this enzyme is unknown but it is likely to function in some aspects of cellular RNA processing. This chain is RNA 3'-terminal phosphate cyclase, found in Escherichia coli O81 (strain ED1a).